A 741-amino-acid polypeptide reads, in one-letter code: Pentatricopeptide repeat-containing protein At1g08070, chloroplastic (741 aa).

13 PPR repeats span residues 98-132, 133-167, 168-202, 203-229, 230-264, 265-299, 300-330, 331-365, 366-396, 403-433, 434-468, 469-499, and 505-535; these read NLLI…GLLP, NSYT…GCDL, DLYV…DVVS, YTAL…IPVK, DVVS…NVRP, DEST…GFGS, NLKI…LPYK, DVIS…GETP, NDVT…IDKR, ASSL…ILHK, SLSS…GIQP, DDIT…MTQD, and KLEH…MEME. Positions 540–615 are type E motif; sequence IWCSLLKACK…VPGCSSIEID (76 aa). The tract at residues 616 to 646 is type E(+) motif; it reads SVVHEFIIGDKFHPRNREIYGMLEEMEVLLE. Residues 647–741 form a type DYW motif region; it reads KAGFVPDTSE…DGVCSCNDYW (95 aa).

This sequence belongs to the PPR family. PCMP-H subfamily. Interacts with ORRM1. Interacts with VAR3/OZ1.

It is found in the plastid. It localises to the chloroplast. Its function is as follows. Involved in multiple sites RNA editing events in chloroplasts. Involved in the editing of the site 9 of ndhB (ndhB-9) and site 1 of ndhG (ndhG-1) transcripts, which are two plastid-encoded subunits of the chloroplast NAD(P)H dehydrogenase (NDH) complex. Not essential for the activity of the NDH complex of the photosynthetic electron transport chain. The sequence is that of Pentatricopeptide repeat-containing protein At1g08070, chloroplastic (PCMP-H12) from Arabidopsis thaliana (Mouse-ear cress).